The following is a 1971-amino-acid chain: MHPVNPFGGQQPSAFAVSSSTTGTYQTKSPFRFGQPSLFGQNSTPSKSLAFSQVPSFATPSGGSHSSSLPAFGLTQTSSVGLFSSLESTPSFAATSSSSVPGNTAFSFKSTSSVGVFPSGATFGPETGEVAGSGFRKTEFKFKPLENAVFKPIPGPESEPEKTQSQISSGFFTFSHPVGSGSGGLTPFSFPQVTNSSVTSSSFIFSKPVTSNTPAFASPLSNQNVEEEKRVSTSAFGSSNSSFSTFPTASPGSLGEPFPANKPSLRQGCEEAISQVEPLPTLMKGLKRKEDQDRSPRRHCHEAAEDPDPLSRGDHPPDKRPVRLNRPRGGTLFGRTIQEVFKSNKEAGRLGSKESKESGFAEPGESDHAAVPGGSQSTMVPSRLPAVTKEEEESRDEKEDSLRGKSVRQSKRREEWIYSLGGVSSLELTAIQCKNIPDYLNDRAILEKHFSKIAKVQRVFTRRSKKLAVIHFFDHASAALARKKGKGLHKDVVIFWHKKKISPSKKLFPLKEKLGESEASQGIEDSPFQHSPLSKPIVRPAAGSLLSKSSPVKKPSLLKMHQFEADPFDSGSEGSEGLGSCVSSLSTLIGTVADTSEEKYRLLDQRDRIMRQARVKRTDLDKARAFVGTCPDMCPEKERYLRETRSQLSVFEVVPGTDQVDHAAAVKEYSRSSADQEEPLPHELRPSAVLSRTMDYLVTQIMDQKEGSLRDWYDFVWNRTRGIRKDITQQHLCDPLTVSLIEKCTRFHIHCAHFMCEEPMSSFDAKINNENMTKCLQSLKEMYQDLRNKGVFCASEAEFQGYNVLLNLNKGDILREVQQFHPDVRNSPEVNFAVQAFAALNSNNFVRFFKLVQSASYLNACLLHCYFNQIRKDALRALNVAYTVSTQRSTVFPLDGVVRMLLFRDSEEATNFLNYHGLTVADGCVELNRSAFLEPEGLCKARKSVFIGRKLTVSVGEVVNGGPLPPVPRHTPVCSFNSQNKYVGESLATELPISTQRAGGDPAGGGRGEDCEAEVDVPTLAVLPQPPPASSATPALHVQPLAPAAAPSLLQASTQPEVLLPKPAPVYSDSDLVQVVDELIQEALQVDCEEVSSAGAAYVAAALGVSNAAVEDLITAATTGILRHVAAEEVSMERQRLEEEKQRAEEERLKQERELMLTQLSEGLAAELTELTVTECVWETCSQELQSAVEIDQKVRVARCCEAVCAHLVDLFLAEEIFQTAKETLQELQCFCKYLQRWREAVAARKKFRRQMRAFPAAPCCVDVNDRLQALVPSAECPITEENLAKGLLDLGHAGKVGVSCTRLRRLRNKTAHQIKVQHFHQQLLRNAAWAPLDLPSIVSEHLPMKQKRRFWKLVLVLPDVEEQTPESPGRILENWLKVKFTGDDSMVGDIGDNAGDIQTLSVFNTLSSKGDQTVSVNVCIKVAHGTLSDSALDAVETQKDLLGTSGLMLLLPPKVKSEEVAEEELSWLSALLQLKQLLQAKPFQPALPLVVLVPSSRGDSAGRAVEDGLMLQDLVSAKLISDYIVVEIPDSVNDLQGTVKVSGAVQWLISRCPQALDLCCQTLVQYVEDGISREFSRRFFHDRRERRLASLPSQEPSTIIELFNSVLQFLASVVSSEQLCDISWPVMEFAEVGGSQLLPHLHWNSPEHLAWLKQAVLGFQLPQMDLPPPGAPWLPVCSMVIQYTSQIPSSSQTQPVLQSQVENLLCRTYQKWKNKSLSPGQELGPSVAEIPWDDIITLCINHKLRDWTPPRLPVTLEALSEDGQICVYFFKNLLRKYHVPLSWEQARMQTQRELQLSHGRSGMRSIHPPTSTFPTPLLHVHQKGKKKEESGREGSLSTEDLLRGASAEELLAQSLSSSLLEEKEENKRFEDQLQQWLSQDSQAFTESTRLPLYLPQTLVSFPDSIKTQTMVKTSTSPQNSGTGKQLRFSEASGSSLTEKLKLLERLIQSSRAEEAASELHLSALLEMVDM.

Disordered stretches follow at residues M1–A50 and P214–S406. The span at G8–S29 shows a compositional bias: polar residues. Position 32 is an asymmetric dimethylarginine (R32). The segment at F33 to R335 is FG-repeats. Composition is skewed to polar residues over residues L38–A50 and P214–N224. Residues S232–S253 show a composition bias toward low complexity. 2 stretches are compositionally biased toward basic and acidic residues: residues R288–P321 and K342–G359. The interval E414–S550 is DNA primase. S424 is modified (phosphoserine). Residues K483 and K484 each carry the N6-acetyllysine modification. 3 positions are modified to phosphoserine: S502, S531, and S550. Residues N768–L951 form the PCI domain. The stretch at H1124 to E1162 forms a coiled coil. Residues R1793 to E1840 are disordered.

Belongs to the SAC3 family. As to quaternary structure, component of the nuclear pore complex (NPC)-associated TREX-2 complex (transcription and export complex 2), composed of at least GANP, 2 copies of ENY2, PCID2, SEM1/DSS1, and either centrin CETN2 or centrin CETN3. The TREX-2 complex also associates with ALYREF/ALY. Interacts with RNA polymerase II subunit POLR2A and with the transcription elongation factor SUPT5H/SPT5. Interacts (via FG-repeats) with NXF1; this interaction is not mediated by RNA. Interacts with nuclear envelope proteins NUP62, NUP153 and RANBP2/NUP358; interaction with NUP153 is required for full localization at the nuclear pore complex. Interacts with several RNA helicases, including DHX9, DDX21, and DDX39A/DDX39, and with DNA topoisomerase TOP2A. Directly interacts with AICDA/AID. Interacts with the glucocorticoid receptor NR3C1. Interacts with MCM3. Post-translationally, phosphorylation at Ser-502 is induced in B-cells by CD40-stimulation, but not by bacterial lipopolysaccharide (LPS). As to expression, expressed at low levels in lymphoid organs, including thymus, spleen and lymph nodes. Up-regulated in stimulated B-cells in spleen and Peyer's patch germinal centers (at protein level).

The protein localises to the cytoplasm. The protein resides in the nucleus. It localises to the nucleus envelope. Its subcellular location is the nuclear pore complex. It is found in the nucleoplasm. The protein localises to the chromosome. The enzyme catalyses L-lysyl-[histone] + acetyl-CoA = N(6)-acetyl-L-lysyl-[histone] + CoA + H(+). As a component of the TREX-2 complex, involved in the export of mRNAs to the cytoplasm through the nuclear pores. Through the acetylation of histones, affects the assembly of nucleosomes at immunoglobulin variable region genes and promotes the recruitment and positioning of transcription complex to favor DNA cytosine deaminase AICDA/AID targeting, hence promoting somatic hypermutations. This is Germinal-center associated nuclear protein (Mcm3ap) from Mus musculus (Mouse).